We begin with the raw amino-acid sequence, 204 residues long: 34 kDa membrane antigen (204 aa).

Positions 1 to 19 (MKRVSLLGSAAIFALVFSA) are cleaved as a signal peptide. The N-palmitoyl cysteine moiety is linked to residue Cys-20. Cys-20 carries the S-diacylglycerol cysteine lipid modification.

The protein belongs to the UPF0423 family.

It is found in the cell membrane. Functionally, this antigen is a pathogen-specific membrane immunogen. The chain is 34 kDa membrane antigen (tpd) from Treponema pallidum (strain Nichols).